Reading from the N-terminus, the 502-residue chain is ATP synthase subunit alpha (502 aa).

Residue 169–176 (GDRQTGKT) participates in ATP binding.

This sequence belongs to the ATPase alpha/beta chains family. As to quaternary structure, F-type ATPases have 2 components, CF(1) - the catalytic core - and CF(0) - the membrane proton channel. CF(1) has five subunits: alpha(3), beta(3), gamma(1), delta(1), epsilon(1). CF(0) has three main subunits: a(1), b(2) and c(9-12). The alpha and beta chains form an alternating ring which encloses part of the gamma chain. CF(1) is attached to CF(0) by a central stalk formed by the gamma and epsilon chains, while a peripheral stalk is formed by the delta and b chains.

The protein resides in the cell membrane. The catalysed reaction is ATP + H2O + 4 H(+)(in) = ADP + phosphate + 5 H(+)(out). In terms of biological role, produces ATP from ADP in the presence of a proton gradient across the membrane. The alpha chain is a regulatory subunit. This is ATP synthase subunit alpha from Desulfitobacterium hafniense (strain DSM 10664 / DCB-2).